We begin with the raw amino-acid sequence, 245 residues long: Phosphoribosylaminoimidazole-succinocarboxamide synthase (245 aa).

The protein belongs to the SAICAR synthetase family.

The catalysed reaction is 5-amino-1-(5-phospho-D-ribosyl)imidazole-4-carboxylate + L-aspartate + ATP = (2S)-2-[5-amino-1-(5-phospho-beta-D-ribosyl)imidazole-4-carboxamido]succinate + ADP + phosphate + 2 H(+). The protein operates within purine metabolism; IMP biosynthesis via de novo pathway; 5-amino-1-(5-phospho-D-ribosyl)imidazole-4-carboxamide from 5-amino-1-(5-phospho-D-ribosyl)imidazole-4-carboxylate: step 1/2. This chain is Phosphoribosylaminoimidazole-succinocarboxamide synthase, found in Nostoc sp. (strain PCC 7120 / SAG 25.82 / UTEX 2576).